The sequence spans 209 residues: Large ribosomal subunit protein bL25 (209 aa).

The disordered stretch occupies residues G190 to E209. Residues D196–E209 are compositionally biased toward acidic residues.

It belongs to the bacterial ribosomal protein bL25 family. CTC subfamily. As to quaternary structure, part of the 50S ribosomal subunit; part of the 5S rRNA/L5/L18/L25 subcomplex. Contacts the 5S rRNA. Binds to the 5S rRNA independently of L5 and L18.

Its function is as follows. This is one of the proteins that binds to the 5S RNA in the ribosome where it forms part of the central protuberance. The sequence is that of Large ribosomal subunit protein bL25 from Ruegeria sp. (strain TM1040) (Silicibacter sp.).